The primary structure comprises 30 residues: Hainantoxin F6-34.84 (30 aa).

Cystine bridges form between Cys-2-Cys-15 and Cys-9-Cys-24.

The protein belongs to the AVIT (prokineticin) family. In terms of tissue distribution, expressed by the venom gland.

It localises to the secreted. The protein is Hainantoxin F6-34.84 of Cyriopagopus hainanus (Chinese bird spider).